Here is a 415-residue protein sequence, read N- to C-terminus: MRVVVGIDDTDSHRGGCTTYVGYLLAKEVLRRWGAGAFRDFPRLVRLNPNVPFKTRGNAAVALDLEIPEGDVEELWRLAVETVAAHSRREGKTDPGVAMAAGGVPERAKTLYRMALTQVVSISAAERAGVLTWGGRGKIGAVAAVGAYFPKSTFELIAYRRGDREAIPPDLVRLLEALTYPYTFHNVDRRRVLIEPRGPDPVYYGIRGLTPQHLRYALSLLEAWGYRPAGWVIYRTNQATDAHIELGVFYGDPLPYSFYRARGLVVEARRVAGRHLVGRLDSGLRFVAYRHLGRLASELERCLRCDVVLYGGLKPRRGGLYLYVERAYVLGRYIPARSRCTYCGGSLESLGRGRGWRCRRCGAVFHSAPIRWLYDTAPRRALLPRPGEWRHLLKPPDVDPTIPNFFSPSSAEWIG.

The protein belongs to the TiaS family.

The protein resides in the cytoplasm. It catalyses the reaction cytidine(34) in tRNA(Ile2) + agmatine + ATP + H2O = 2-agmatinylcytidine(34) in tRNA(Ile2) + AMP + 2 phosphate + 2 H(+). Functionally, ATP-dependent agmatine transferase that catalyzes the formation of 2-agmatinylcytidine (agm2C) at the wobble position (C34) of tRNA(Ile2), converting the codon specificity from AUG to AUA. This is tRNA(Ile2) 2-agmatinylcytidine synthetase TiaS from Pyrobaculum neutrophilum (strain DSM 2338 / JCM 9278 / NBRC 100436 / V24Sta) (Thermoproteus neutrophilus).